We begin with the raw amino-acid sequence, 630 residues long: Differentially expressed in FDCP 6 (630 aa).

Tyr-210 is subject to Phosphotyrosine. Residues 216-312 form the PH domain; that stretch reads DVLKQGYLWK…WTAAIQTAIR (97 aa). At Lys-225 the chain carries N6-acetyllysine. 3 disordered regions span residues 318 to 341, 378 to 418, and 552 to 630; these read KTSL…RRRA, LQEE…ELKK, and HPIE…APGN. Basic and acidic residues-rich tracts occupy residues 331-341 and 378-392; these read EQREQRERRRA and LQEE…HKEL. Residues 588 to 606 show a composition bias toward polar residues; it reads WGSQGNRTLSVNSSEQKSL. Ser-590 is modified (phosphoserine). Over residues 620–630 the composition is skewed to basic and acidic residues; that stretch reads QEEKLDPAPGN.

In terms of assembly, interacts with IRF4, activated RAC1 and F-actin. Both the phosphorylated and non-phosphorylated forms bind phosphatidylinositol 3,4,5-trisphosphate (PtdInsP3). Interacts with ZAP70. Interacts with RAB11A. Tyrosine-phosphorylated by tyrosine-protein kinase LCK in response to T-cell activation. In terms of tissue distribution, thymus.

The protein resides in the cytoplasm. The protein localises to the cell membrane. Its subcellular location is the nucleus. It localises to the cytoskeleton. It is found in the perinuclear region. The protein resides in the cell projection. The protein localises to the filopodium. In terms of biological role, phosphatidylinositol 3,4,5-trisphosphate-dependent guanine nucleotide exchange factor (GEF) which plays a role in the activation of Rho GTPases RAC1, RhoA and CDC42. Can regulate cell morphology in cooperation with activated RAC1. Involved in immune homeostasis by ensuring proper trafficking and availability of T-cell regulator CTLA-4 at T-cell surface. Plays a role in Th2 (T helper cells) development and/or activation, perhaps by interfering with ZAP70 signaling. Required for optimal T-cell effector function, lymphocyte homeostasis and the prevention of systemic autoimmunity. The sequence is that of Differentially expressed in FDCP 6 (Def6) from Mus musculus (Mouse).